The sequence spans 297 residues: Lipoyl synthase (297 aa).

C37, C42, C48, C63, C67, C70, and S276 together coordinate [4Fe-4S] cluster. Residues 49 to 265 (WSRKHATVMI…ERIAKTKGFL (217 aa)) enclose the Radical SAM core domain.

It belongs to the radical SAM superfamily. Lipoyl synthase family. [4Fe-4S] cluster is required as a cofactor.

It localises to the cytoplasm. The enzyme catalyses [[Fe-S] cluster scaffold protein carrying a second [4Fe-4S](2+) cluster] + N(6)-octanoyl-L-lysyl-[protein] + 2 oxidized [2Fe-2S]-[ferredoxin] + 2 S-adenosyl-L-methionine + 4 H(+) = [[Fe-S] cluster scaffold protein] + N(6)-[(R)-dihydrolipoyl]-L-lysyl-[protein] + 4 Fe(3+) + 2 hydrogen sulfide + 2 5'-deoxyadenosine + 2 L-methionine + 2 reduced [2Fe-2S]-[ferredoxin]. The protein operates within protein modification; protein lipoylation via endogenous pathway; protein N(6)-(lipoyl)lysine from octanoyl-[acyl-carrier-protein]: step 2/2. Catalyzes the radical-mediated insertion of two sulfur atoms into the C-6 and C-8 positions of the octanoyl moiety bound to the lipoyl domains of lipoate-dependent enzymes, thereby converting the octanoylated domains into lipoylated derivatives. The sequence is that of Lipoyl synthase from Rickettsia typhi (strain ATCC VR-144 / Wilmington).